Here is a 308-residue protein sequence, read N- to C-terminus: GTP cyclohydrolase FolE2 (308 aa).

Belongs to the GTP cyclohydrolase IV family.

It catalyses the reaction GTP + H2O = 7,8-dihydroneopterin 3'-triphosphate + formate + H(+). It functions in the pathway cofactor biosynthesis; 7,8-dihydroneopterin triphosphate biosynthesis; 7,8-dihydroneopterin triphosphate from GTP: step 1/1. Its function is as follows. Converts GTP to 7,8-dihydroneopterin triphosphate. The sequence is that of GTP cyclohydrolase FolE2 from Colwellia psychrerythraea (strain 34H / ATCC BAA-681) (Vibrio psychroerythus).